We begin with the raw amino-acid sequence, 317 residues long: Beta-ketoacyl-[acyl-carrier-protein] synthase III (317 aa).

Residues Cys112 and His244 contribute to the active site. Residues Gln245–Arg249 form an ACP-binding region. The active site involves Asn274.

This sequence belongs to the thiolase-like superfamily. FabH family. Homodimer.

It localises to the cytoplasm. The enzyme catalyses malonyl-[ACP] + acetyl-CoA + H(+) = 3-oxobutanoyl-[ACP] + CO2 + CoA. It functions in the pathway lipid metabolism; fatty acid biosynthesis. Functionally, catalyzes the condensation reaction of fatty acid synthesis by the addition to an acyl acceptor of two carbons from malonyl-ACP. Catalyzes the first condensation reaction which initiates fatty acid synthesis and may therefore play a role in governing the total rate of fatty acid production. Possesses both acetoacetyl-ACP synthase and acetyl transacylase activities. Its substrate specificity determines the biosynthesis of branched-chain and/or straight-chain of fatty acids. This Shigella boydii serotype 4 (strain Sb227) protein is Beta-ketoacyl-[acyl-carrier-protein] synthase III.